Here is a 134-residue protein sequence, read N- to C-terminus: Small ribosomal subunit protein uS17c (134 aa).

Residues 1–37 constitute a chloroplast transit peptide; sequence HHFFTGNGIGLNRFSNPISSPQTQTQTRSLPFPAIKA. The tract at residues 106-134 is disordered; it reads FLAVPAPSRKSKKAGSSGELGIPLQSQQE.

Belongs to the universal ribosomal protein uS17 family. As to quaternary structure, part of the 30S ribosomal subunit.

It is found in the plastid. The protein localises to the chloroplast. In terms of biological role, one of the primary rRNA binding proteins, it binds specifically to the 5'-end of 16S ribosomal RNA. The polypeptide is Small ribosomal subunit protein uS17c (RPS17) (Pisum sativum (Garden pea)).